Here is a 156-residue protein sequence, read N- to C-terminus: uncharacterized protein (156 aa).

This is an uncharacterized protein from Staphylococcus aureus (strain MW2).